The following is a 955-amino-acid chain: Glycine dehydrogenase (decarboxylating) (955 aa).

An N6-(pyridoxal phosphate)lysine modification is found at Lys-702.

Belongs to the GcvP family. The glycine cleavage system is composed of four proteins: P, T, L and H. Pyridoxal 5'-phosphate is required as a cofactor.

The enzyme catalyses N(6)-[(R)-lipoyl]-L-lysyl-[glycine-cleavage complex H protein] + glycine + H(+) = N(6)-[(R)-S(8)-aminomethyldihydrolipoyl]-L-lysyl-[glycine-cleavage complex H protein] + CO2. In terms of biological role, the glycine cleavage system catalyzes the degradation of glycine. The P protein binds the alpha-amino group of glycine through its pyridoxal phosphate cofactor; CO(2) is released and the remaining methylamine moiety is then transferred to the lipoamide cofactor of the H protein. The polypeptide is Glycine dehydrogenase (decarboxylating) (Stenotrophomonas maltophilia (strain K279a)).